A 229-amino-acid polypeptide reads, in one-letter code: Lantibiotic transport ATP-binding protein SrtF (229 aa).

An ABC transporter domain is found at 2 to 225 (LKIQNLKKSY…EELFNNQILF (224 aa)). ATP is bound at residue 34-41 (GPNGAGKS).

It belongs to the ABC transporter superfamily.

Its function is as follows. Implicated in the export process of the lantibiotic SrtA. The protein is Lantibiotic transport ATP-binding protein SrtF (srtF) of Streptococcus pyogenes serotype M1.